The chain runs to 327 residues: Pumilio homolog 18 (327 aa).

One can recognise a PUM-HD domain in the interval 1–324 (MAVADNPFSM…NIANILDSFR (324 aa)). Pumilio repeat units follow at residues 79–114 (SDSD…FCAA), 115–149 (ILRR…ALYE), 150–185 (RILY…DQLL), 186–222 (ELVA…NIAV), 223–260 (NLYG…ELLG), and 261–295 (CDGD…DLFW).

It is found in the cytoplasm. Its function is as follows. Sequence-specific RNA-binding protein that regulates translation and mRNA stability by binding the 3'-UTR of target mRNAs. This chain is Pumilio homolog 18 (APUM18), found in Arabidopsis thaliana (Mouse-ear cress).